We begin with the raw amino-acid sequence, 393 residues long: BEN domain-containing protein 5 (393 aa).

Residues 169–212 (RVLYEELLRSYQQQQQEMKHIQHELERTRKQLVQQAKKLKDYGS) are a coiled coil. The BEN domain maps to 274–380 (GSGVWVNEEK…EKIMDINKSC (107 aa)).

May act as a transcriptional repressor. This Xenopus laevis (African clawed frog) protein is BEN domain-containing protein 5 (bend5).